A 157-amino-acid polypeptide reads, in one-letter code: Peptide methionine sulfoxide reductase MsrB (157 aa).

The MsrB domain maps to 14 to 137 (DNDLRERLTP…NSAALRFVPL (124 aa)). Catalysis depends on cysteine 126, which acts as the Nucleophile.

It belongs to the MsrB Met sulfoxide reductase family.

The enzyme catalyses L-methionyl-[protein] + [thioredoxin]-disulfide + H2O = L-methionyl-(R)-S-oxide-[protein] + [thioredoxin]-dithiol. The chain is Peptide methionine sulfoxide reductase MsrB from Deinococcus radiodurans (strain ATCC 13939 / DSM 20539 / JCM 16871 / CCUG 27074 / LMG 4051 / NBRC 15346 / NCIMB 9279 / VKM B-1422 / R1).